The chain runs to 274 residues: Penicillin-insensitive murein endopeptidase (274 aa).

Residues 1 to 19 (MKKTAIALLAWFVSSASLA) form the signal peptide. 3 cysteine pairs are disulfide-bonded: Cys-44/Cys-265, Cys-187/Cys-235, and Cys-216/Cys-223. Residues His-110, His-113, Asp-120, Asp-147, His-150, and His-211 each contribute to the Zn(2+) site. Positions 225–274 (DQPLPPPGDGCGAELQSWFEPPKPGTTKPEKKTPPPLPPSCQALLDEHVL) are disordered.

Belongs to the peptidase M74 family. In terms of assembly, dimer. The cofactor is Zn(2+).

It is found in the periplasm. In terms of biological role, murein endopeptidase that cleaves the D-alanyl-meso-2,6-diamino-pimelyl amide bond that connects peptidoglycan strands. Likely plays a role in the removal of murein from the sacculus. The protein is Penicillin-insensitive murein endopeptidase of Salmonella paratyphi A (strain AKU_12601).